Consider the following 745-residue polypeptide: MFPLRALWLVWALLGVAGSCPEPCACVDKYAHQFADCAYKELREVPEGLPANVTTLSLSANKITVLRRGAFADVTQVTSLWLAHNEVRTVEPGALAVLSQLKNLDLSHNFISSFPWSDLRNLSALQLLKMNHNRLGSLPRDALGALPDLRSLRINNNRLRTLAPGTFDALSALSHLQLYHNPFHCGCGLVWLQAWAASTRVSLPEPDSIACASPPALQGVPVYRLPALPCAPPSVHLSAEPPLEAPGTPLRAGLAFVLHCIADGHPTPRLQWQLQIPGGTVVLEPPVLSGEDDGVGAEEGEGEGDGDLLTQTQAQTPTPAPAWPAPPATPRFLALANGSLLVPLLSAKEAGVYTCRAHNELGANSTSIRVAVAATGPPKHAPGAGGEPDGQAPTSERKSTAKGRGNSVLPSKPEGKIKGQGLAKVSILGETETEPEEDTSEGEEAEDQILADPAEEQRCGNGDPSRYVSNHAFNQSAELKPHVFELGVIALDVAEREARVQLTPLAARWGPGPGGAGGAPRPGRRPLRLLYLCPAGGGAAVQWSRVEEGVNAYWFRGLRPGTNYSVCLALAGEACHVQVVFSTKKELPSLLVIVAVSVFLLVLATVPLLGAACCHLLAKHPGKPYRLILRPQAPDPMEKRIAADFDPRASYLESEKSYPAGGEAGGEEPEDVQGEGLDEDAEQGDPSGDLQREESLAACSLVESQSKANQEEFEAGSEYSDRLPLGAEAVNIAQEINGNYRQTAG.

A signal peptide spans 1-18 (MFPLRALWLVWALLGVAG). One can recognise an LRRNT domain in the interval 19–51 (SCPEPCACVDKYAHQFADCAYKELREVPEGLPA). Over 19–589 (SCPEPCACVD…VFSTKKELPS (571 aa)) the chain is Extracellular. The N-linked (GlcNAc...) asparagine glycan is linked to Asn52. LRR repeat units lie at residues 52 to 73 (NVTT…AFAD), 76 to 97 (QVTS…ALAV), 100 to 123 (QLKN…RNLS), 124 to 145 (ALQL…ALGA), and 148 to 169 (DLRS…TFDA). Asn121 carries an N-linked (GlcNAc...) asparagine glycan. Residues 181–232 (NPFHCGCGLVWLQAWAASTRVSLPEPDSIACASPPALQGVPVYRLPALPCAP) form the LRRCT domain. Residues 233 to 371 (PSVHLSAEPP…GANSTSIRVA (139 aa)) form the Ig-like domain. Cys260 and Cys355 are oxidised to a cystine. Residues 287–326 (VLSGEDDGVGAEEGEGEGDGDLLTQTQAQTPTPAPAWPAP) are disordered. Over residues 290–306 (GEDDGVGAEEGEGEGDG) the composition is skewed to acidic residues. N-linked (GlcNAc...) asparagine glycans are attached at residues Asn337 and Asn364. Positions 375–466 (TGPPKHAPGA…QRCGNGDPSR (92 aa)) are disordered. The segment covering 431–449 (TETEPEEDTSEGEEAEDQI) has biased composition (acidic residues). Residues Asn474 and Asn563 are each glycosylated (N-linked (GlcNAc...) asparagine). A helical transmembrane segment spans residues 590–610 (LLVIVAVSVFLLVLATVPLLG). Residues 611–745 (AACCHLLAKH…INGNYRQTAG (135 aa)) lie on the Cytoplasmic side of the membrane. Positions 656–722 (KSYPAGGEAG…FEAGSEYSDR (67 aa)) are disordered. Residues 665 to 683 (GGEEPEDVQGEGLDEDAEQ) show a composition bias toward acidic residues. Tyr719 bears the Phosphotyrosine mark. Ser720 bears the Phosphoserine mark.

In terms of assembly, homomultimer. Interacts with NTRK1/TrkA.

Its subcellular location is the cell membrane. In terms of biological role, required for axon extension during neural development. This chain is Immunoglobulin superfamily containing leucine-rich repeat protein 2 (ISLR2), found in Homo sapiens (Human).